A 158-amino-acid chain; its full sequence is 6,7-dimethyl-8-ribityllumazine synthase (158 aa).

5-amino-6-(D-ribitylamino)uracil is bound by residues Phe22, 56–58, and 80–82; these read ALE and VVI. Residue 85 to 86 coordinates (2S)-2-hydroxy-3-oxobutyl phosphate; the sequence is ET. His88 acts as the Proton donor in catalysis. Asn113 serves as a coordination point for 5-amino-6-(D-ribitylamino)uracil. Arg127 provides a ligand contact to (2S)-2-hydroxy-3-oxobutyl phosphate.

It belongs to the DMRL synthase family.

It carries out the reaction (2S)-2-hydroxy-3-oxobutyl phosphate + 5-amino-6-(D-ribitylamino)uracil = 6,7-dimethyl-8-(1-D-ribityl)lumazine + phosphate + 2 H2O + H(+). The protein operates within cofactor biosynthesis; riboflavin biosynthesis; riboflavin from 2-hydroxy-3-oxobutyl phosphate and 5-amino-6-(D-ribitylamino)uracil: step 1/2. Functionally, catalyzes the formation of 6,7-dimethyl-8-ribityllumazine by condensation of 5-amino-6-(D-ribitylamino)uracil with 3,4-dihydroxy-2-butanone 4-phosphate. This is the penultimate step in the biosynthesis of riboflavin. This Neisseria meningitidis serogroup C / serotype 2a (strain ATCC 700532 / DSM 15464 / FAM18) protein is 6,7-dimethyl-8-ribityllumazine synthase.